We begin with the raw amino-acid sequence, 157 residues long: Transcription elongation factor GreA (157 aa).

Positions 12 to 74 form a coiled coil; it reads LKKLEEELEY…TLEAMLKNAK (63 aa).

It belongs to the GreA/GreB family.

Its function is as follows. Necessary for efficient RNA polymerase transcription elongation past template-encoded arresting sites. The arresting sites in DNA have the property of trapping a certain fraction of elongating RNA polymerases that pass through, resulting in locked ternary complexes. Cleavage of the nascent transcript by cleavage factors such as GreA or GreB allows the resumption of elongation from the new 3'terminus. GreA releases sequences of 2 to 3 nucleotides. The sequence is that of Transcription elongation factor GreA from Caldanaerobacter subterraneus subsp. tengcongensis (strain DSM 15242 / JCM 11007 / NBRC 100824 / MB4) (Thermoanaerobacter tengcongensis).